The primary structure comprises 180 residues: ADP-ribosylation factor 5 (180 aa).

Glycine 2 is lipidated: N-myristoyl glycine. GTP-binding positions include 24 to 31 (GLDAAGKT), 67 to 71 (DVGGQ), and 126 to 129 (NKQD).

The protein belongs to the small GTPase superfamily. Arf family. In terms of assembly, interacts (when activated) with GGA1, GGA2 and GGA3; the interaction is required for proper subcellular location of GGA1, GGA2 and GGA3. Binds ASAP2. Interacts with NCS1/FREQ at the Golgi complex. Interacts with RAB11FIP3 and RAB11FIP4.

It localises to the golgi apparatus. It is found in the cytoplasm. The protein resides in the perinuclear region. The protein localises to the membrane. Its subcellular location is the trans-Golgi network membrane. In terms of biological role, GTP-binding protein involved in protein trafficking; may modulate vesicle budding and uncoating within the Golgi apparatus. Its function is as follows. (Microbial infection) Functions as an allosteric activator of the cholera toxin catalytic subunit, an ADP-ribosyltransferase. This chain is ADP-ribosylation factor 5 (ARF5), found in Homo sapiens (Human).